A 408-amino-acid polypeptide reads, in one-letter code: CinA-like protein (408 aa).

Belongs to the CinA family.

This is CinA-like protein from Anaeromyxobacter dehalogenans (strain 2CP-1 / ATCC BAA-258).